A 1081-amino-acid polypeptide reads, in one-letter code: FHF complex subunit HOOK-interacting protein 1A (1081 aa).

Disordered regions lie at residues 474 to 496 (SEEQ…PPPA), 544 to 623 (PETF…DPPK), 658 to 770 (EKDT…ENEP), and 863 to 883 (EAGS…RHPV). Positions 486-496 (PSSPSPPPPPA) are enriched in pro residues. Positions 553-564 (EESRENSGHPEA) are enriched in basic and acidic residues. Over residues 567 to 576 (PQQSVRTSGQ) the composition is skewed to polar residues. A compositionally biased stretch (acidic residues) spans 680-707 (EPLEDTSEQQEDTSEQLEDTSELQEDTA). Polar residues-rich tracts occupy residues 727–738 (EAQSLPTSNGPL) and 746–762 (ESQP…NTFS).

This sequence belongs to the FHIP family. May be a component of the FTS/Hook/FHIP complex (FHF complex), composed of AKTIP/FTS, FHIP1B, and one or more members of the Hook family of proteins HOOK1, HOOK2, and HOOK3. May interact directly with AKTIP/FTS.

Probable component of the FTS/Hook/FHIP complex (FHF complex). FHF complex promotes the distribution of AP-4 complex to the perinuclear area of the cell. This is FHF complex subunit HOOK-interacting protein 1A from Mus musculus (Mouse).